A 341-amino-acid chain; its full sequence is Glycerol-3-phosphate dehydrogenase [NAD(P)+] (341 aa).

NADPH-binding residues include Ser14, Phe15, Arg35, and Lys108. Sn-glycerol 3-phosphate contacts are provided by Lys108 and Gly136. Ala140 contributes to the NADPH binding site. Sn-glycerol 3-phosphate contacts are provided by Lys191, Asp244, Ser254, Arg255, and Asn256. Catalysis depends on Lys191, which acts as the Proton acceptor. Residue Arg255 participates in NADPH binding. The NADPH site is built by Val279 and Glu281.

It belongs to the NAD-dependent glycerol-3-phosphate dehydrogenase family.

It localises to the cytoplasm. It catalyses the reaction sn-glycerol 3-phosphate + NAD(+) = dihydroxyacetone phosphate + NADH + H(+). The catalysed reaction is sn-glycerol 3-phosphate + NADP(+) = dihydroxyacetone phosphate + NADPH + H(+). It participates in membrane lipid metabolism; glycerophospholipid metabolism. In terms of biological role, catalyzes the reduction of the glycolytic intermediate dihydroxyacetone phosphate (DHAP) to sn-glycerol 3-phosphate (G3P), the key precursor for phospholipid synthesis. The polypeptide is Glycerol-3-phosphate dehydrogenase [NAD(P)+] (Pseudomonas syringae pv. tomato (strain ATCC BAA-871 / DC3000)).